Reading from the N-terminus, the 261-residue chain is Glandular kallikrein-7, submandibular/renal (261 aa).

The signal sequence occupies residues methionine 1 to alanine 18. Residues proline 19–arginine 24 constitute a propeptide, activation peptide. The Peptidase S1 domain occupies valine 25–lysine 258. 5 disulfide bridges follow: cysteine 31-cysteine 173, cysteine 50-cysteine 66, cysteine 152-cysteine 219, cysteine 184-cysteine 198, and cysteine 209-cysteine 234. Histidine 65 acts as the Charge relay system in catalysis. A glycan (N-linked (GlcNAc...) asparagine) is linked at asparagine 108. Aspartate 120 functions as the Charge relay system in the catalytic mechanism. The Charge relay system role is filled by serine 213.

This sequence belongs to the peptidase S1 family. Kallikrein subfamily. Kidney and submandibular gland. Not expressed in liver, pancreas, spleen, parotid, testis, cortex, prostate, ovary and pituitary.

The catalysed reaction is Preferential cleavage of Arg-|-Xaa bonds in small molecule substrates. Highly selective action to release kallidin (lysyl-bradykinin) from kininogen involves hydrolysis of Met-|-Xaa or Leu-|-Xaa.. Its function is as follows. Glandular kallikreins cleave Met-Lys and Arg-Ser bonds in kininogen to release Lys-bradykinin. Predominant kallikrein protein in the kidney. The sequence is that of Glandular kallikrein-7, submandibular/renal (Klk7) from Rattus norvegicus (Rat).